Consider the following 126-residue polypeptide: Fluoride-specific ion channel FluC (126 aa).

Transmembrane regions (helical) follow at residues 2–22 (IKSL…RWLL) and 36–56 (GTLV…AYFL). Na(+) is bound by residues Gly-75 and Ser-78. The next 2 membrane-spanning stretches (helical) occupy residues 80 to 100 (FSTF…IWAL) and 105 to 125 (VHVI…TILF).

Belongs to the fluoride channel Fluc/FEX (TC 1.A.43) family. Homodimer.

Its subcellular location is the cell inner membrane. The catalysed reaction is fluoride(in) = fluoride(out). With respect to regulation, na(+) is not transported, but it plays an essential structural role and its presence is essential for fluoride channel function. Its function is as follows. Fluoride-specific ion channel. Important for reducing fluoride concentration in the cell, thus reducing its toxicity. Is highly specific for fluoride ions and cannot transport chloride ions. In Escherichia coli O1:K1 / APEC, this protein is Fluoride-specific ion channel FluC.